Here is a 234-residue protein sequence, read N- to C-terminus: Phosphoribosylaminoimidazole-succinocarboxamide synthase (234 aa).

Belongs to the SAICAR synthetase family.

The enzyme catalyses 5-amino-1-(5-phospho-D-ribosyl)imidazole-4-carboxylate + L-aspartate + ATP = (2S)-2-[5-amino-1-(5-phospho-beta-D-ribosyl)imidazole-4-carboxamido]succinate + ADP + phosphate + 2 H(+). The protein operates within purine metabolism; IMP biosynthesis via de novo pathway; 5-amino-1-(5-phospho-D-ribosyl)imidazole-4-carboxamide from 5-amino-1-(5-phospho-D-ribosyl)imidazole-4-carboxylate: step 1/2. The protein is Phosphoribosylaminoimidazole-succinocarboxamide synthase of Sulfurisphaera tokodaii (strain DSM 16993 / JCM 10545 / NBRC 100140 / 7) (Sulfolobus tokodaii).